The chain runs to 224 residues: PKHD-type hydroxylase HNE_1625 (224 aa).

Positions 77 to 175 (KFAPPLISCS…RFVFVGWIQS (99 aa)) constitute a Fe2OG dioxygenase domain. Residues H95, D97, and H156 each coordinate Fe cation. Residue R166 coordinates 2-oxoglutarate.

Requires Fe(2+) as cofactor. L-ascorbate is required as a cofactor.

The chain is PKHD-type hydroxylase HNE_1625 from Hyphomonas neptunium (strain ATCC 15444).